The following is a 650-amino-acid chain: Laccase-like multicopper oxidase 1 (650 aa).

The first 20 residues, 1 to 20, serve as a signal peptide directing secretion; it reads MLLSKLSILLAKWLSVAVYA. Plastocyanin-like domains follow at residues 41-151, 162-360, and 439-595; these read QVPS…IVED, ERIL…LRYN, and KPVL…VVGD. A disulfide bond links cysteine 46 and cysteine 254. N-linked (GlcNAc...) asparagine glycans are attached at residues asparagine 55 and asparagine 83. Cu cation-binding residues include histidine 87, histidine 89, histidine 133, and histidine 135. Residues histidine 501, histidine 504, histidine 506, histidine 576, cysteine 577, histidine 578, and histidine 582 each contribute to the Cu cation site. Residue asparagine 620 is glycosylated (N-linked (GlcNAc...) asparagine).

This sequence belongs to the multicopper oxidase family. Monomer. N-glycosylation Asn-55 and Asn-83 is involved in folding, conformational stability and laccase activity.

It catalyses the reaction 2 2',3,4-trihydroxy-trans-chalcone + O2 + 2 H(+) = 2 3',4'-dihydroxyaurone + 2 H2O. With respect to regulation, retains almost half of its activity in presence of high salt concentrations up to 100 mM NaCl. Retains also more than 85% of its original activity in the presence of 1 mM EDTA, indicating a satisfactory resistance towards chelators, which is rare among metal-containing enzyme. The activity drops significantly in the presence of NaN(3) or SDS. Appears more active in the presence of methanol compared to ethanol, but acetone or DMSO addition severely affect remaining laccase activity. Its function is as follows. Yellow laccase-like multicopper oxidase that is able to oxidize a variety of phenolic compounds including standard laccase substrates such as 2'-azino-bis(3-ethylbenzothiazoline-6-sulphonic acid) (ABTS) and 2,6-dimethoxyphenol (2,6-DMP). The existence of an ortho-hydroxy group is crucial for oxidation since pyrogallol and catechol, which contain ortho-hydroxy groups, are readily oxidized, which is not the case for resorcinol and hydroquinone, that contain meta- and para-hydroxy groups, respectively. The same is also true for the existence of a methoxy group in an ortho-position, since 2,6-DMP, guaiacol and ferulic and caffeic acids are also rather easily oxidized compared with the corresponding unsubstituted compound. Can be used for the bioconversion of 2',3,4-trihy-droxychalcone to 3',4'-dihydroxy-aurone, a bioactive aurone recently shown to possess inhibitory activity against several isoforms of the histone deacetylase complex (HDAC). The chain is Laccase-like multicopper oxidase 1 from Thermothelomyces thermophilus (strain ATCC 42464 / BCRC 31852 / DSM 1799) (Sporotrichum thermophile).